Consider the following 868-residue polypeptide: DNA mismatch repair protein MutS (868 aa).

Position 623–630 (623–630 (GPNMAGKS)) interacts with ATP.

It belongs to the DNA mismatch repair MutS family.

This protein is involved in the repair of mismatches in DNA. It is possible that it carries out the mismatch recognition step. This protein has a weak ATPase activity. In Magnetococcus marinus (strain ATCC BAA-1437 / JCM 17883 / MC-1), this protein is DNA mismatch repair protein MutS.